The primary structure comprises 282 residues: Undecaprenyl-diphosphatase (282 aa).

A run of 7 helical transmembrane segments spans residues 6 to 26, 45 to 65, 85 to 105, 112 to 132, 200 to 220, 230 to 250, and 262 to 282; these read LYFV…FIPV, SGKV…MWIF, LFTR…AIFI, FYHP…MLWV, ATEF…VYDM, HDLG…LLVV, and YRGF…WLAF.

The protein belongs to the UppP family.

It is found in the cell inner membrane. It catalyses the reaction di-trans,octa-cis-undecaprenyl diphosphate + H2O = di-trans,octa-cis-undecaprenyl phosphate + phosphate + H(+). Catalyzes the dephosphorylation of undecaprenyl diphosphate (UPP). Confers resistance to bacitracin. This Bordetella avium (strain 197N) protein is Undecaprenyl-diphosphatase.